The sequence spans 197 residues: Holliday junction resolvase RecU (197 aa).

Residues 1–21 are disordered; it reads MVNYPSGVRAGGYPQKKKNQN. Mg(2+)-binding residues include threonine 82, aspartate 84, aspartate 97, and glutamine 116.

Belongs to the RecU family. It depends on Mg(2+) as a cofactor.

It is found in the cytoplasm. The enzyme catalyses Endonucleolytic cleavage at a junction such as a reciprocal single-stranded crossover between two homologous DNA duplexes (Holliday junction).. In terms of biological role, endonuclease that resolves Holliday junction intermediates in genetic recombination. Cleaves mobile four-strand junctions by introducing symmetrical nicks in paired strands. Promotes annealing of linear ssDNA with homologous dsDNA. Required for DNA repair, homologous recombination and chromosome segregation. This is Holliday junction resolvase RecU from Oenococcus oeni (strain ATCC BAA-331 / PSU-1).